The chain runs to 171 residues: Photosystem I assembly protein Ycf3 (171 aa).

TPR repeat units follow at residues 35–68 (AFTY…EIDP), 72–105 (SYIL…NPSL), and 120–153 (GEQA…APSN).

This sequence belongs to the Ycf3 family.

It localises to the plastid. Its subcellular location is the chloroplast thylakoid membrane. Its function is as follows. Essential for the assembly of the photosystem I (PSI) complex. May act as a chaperone-like factor to guide the assembly of the PSI subunits. The protein is Photosystem I assembly protein Ycf3 of Angiopteris evecta (Mule's foot fern).